A 545-amino-acid polypeptide reads, in one-letter code: Esterase-5C (545 aa).

Positions methionine 1–alanine 19 are cleaved as a signal peptide. An intrachain disulfide couples cysteine 84 to cysteine 103. Residue asparagine 113 is glycosylated (N-linked (GlcNAc...) asparagine). Serine 207 acts as the Acyl-ester intermediate in catalysis. A disulfide bridge links cysteine 259 with cysteine 271. Asparagine 421 carries an N-linked (GlcNAc...) asparagine glycan. Catalysis depends on histidine 467, which acts as the Charge relay system. N-linked (GlcNAc...) asparagine glycosylation occurs at asparagine 507. The cysteines at positions 515 and 536 are disulfide-linked.

The protein belongs to the type-B carboxylesterase/lipase family.

The protein resides in the secreted. The catalysed reaction is a carboxylic ester + H2O = an alcohol + a carboxylate + H(+). The polypeptide is Esterase-5C (Est-5C) (Drosophila miranda (Fruit fly)).